The sequence spans 171 residues: Shikimate kinase (171 aa).

ATP is bound at residue 14–19 (GAGKST). Serine 18 serves as a coordination point for Mg(2+). Aspartate 36, arginine 60, and glycine 82 together coordinate substrate. Arginine 120 provides a ligand contact to ATP. Residue arginine 139 participates in substrate binding. Glutamine 156 serves as a coordination point for ATP.

The protein belongs to the shikimate kinase family. As to quaternary structure, monomer. Mg(2+) serves as cofactor.

It localises to the cytoplasm. It carries out the reaction shikimate + ATP = 3-phosphoshikimate + ADP + H(+). It participates in metabolic intermediate biosynthesis; chorismate biosynthesis; chorismate from D-erythrose 4-phosphate and phosphoenolpyruvate: step 5/7. Catalyzes the specific phosphorylation of the 3-hydroxyl group of shikimic acid using ATP as a cosubstrate. The sequence is that of Shikimate kinase from Pseudoalteromonas atlantica (strain T6c / ATCC BAA-1087).